The sequence spans 447 residues: Tubulin beta chain (447 aa).

GTP-binding residues include Gln11, Glu69, Ser138, Gly142, Thr143, Gly144, Asn204, and Asn226. Mg(2+) is bound at residue Glu69. The disordered stretch occupies residues 424–447; that stretch reads QYQEARSTDSDEYDNEEYYNQQEE. Acidic residues predominate over residues 433–447; that stretch reads SDEYDNEEYYNQQEE.

It belongs to the tubulin family. Dimer of alpha and beta chains. A typical microtubule is a hollow water-filled tube with an outer diameter of 25 nm and an inner diameter of 15 nM. Alpha-beta heterodimers associate head-to-tail to form protofilaments running lengthwise along the microtubule wall with the beta-tubulin subunit facing the microtubule plus end conferring a structural polarity. Microtubules usually have 13 protofilaments but different protofilament numbers can be found in some organisms and specialized cells. Requires Mg(2+) as cofactor. Lens specific.

It is found in the cytoplasm. The protein localises to the cytoskeleton. Its function is as follows. Tubulin is the major constituent of microtubules, a cylinder consisting of laterally associated linear protofilaments composed of alpha- and beta-tubulin heterodimers. Microtubules grow by the addition of GTP-tubulin dimers to the microtubule end, where a stabilizing cap forms. Below the cap, tubulin dimers are in GDP-bound state, owing to GTPase activity of alpha-tubulin. This is Tubulin beta chain from Enteroctopus dofleini (North Pacific giant octopus).